We begin with the raw amino-acid sequence, 170 residues long: Fibroblast growth factor 2 (170 aa).

Residues 1–21 (VGGRGRGRGTAAAARREPGGA) are disordered. An omega-N-methylarginine; alternate mark is found at Arg-4, Arg-6, and Arg-8. A symmetric dimethylarginine; alternate mark is found at Arg-4, Arg-6, and Arg-8. Positions 9–21 (GTAAAARREPGGA) are enriched in low complexity. Asn-51 provides a ligand contact to heparin. The residue at position 97 (Tyr-97) is a Phosphotyrosine; by TEC. Lys-110 is covalently cross-linked (Glycyl lysine isopeptide (Lys-Gly) (interchain with G-Cter in SUMO1)). A heparin-binding region spans residues 143 to 159 (KRTGQYKLGSKTGPGQK).

It belongs to the heparin-binding growth factors family. In terms of assembly, monomer. Homodimer. Interacts with FGFR1, FGFR2, FGFR3 and FGFR4. Affinity between fibroblast growth factors (FGFs) and their receptors is increased by heparan sulfate glycosaminoglycans that function as coreceptors. Interacts with CSPG4, FGFBP1 and TEC. Found in a complex with FGFBP1, FGF1 and FGF2. Interacts with FGFBP3. Interacts with integrin ITGAV:ITGB3; the interaction is required for FGF2 signaling. Interacts with SNORC (via the extracellular domain). Interacts with glypican GPC3. Post-translationally, the N-terminus of isoform 2 is blocked. Phosphorylation at Tyr-97 regulates FGF2 unconventional secretion.

It localises to the secreted. Its subcellular location is the nucleus. Functionally, acts as a ligand for FGFR1, FGFR2, FGFR3 and FGFR4. Also acts as an integrin ligand which is required for FGF2 signaling. Binds to integrin ITGAV:ITGB3. Plays an important role in the regulation of cell survival, cell division, cell differentiation and cell migration. Functions as a potent mitogen in vitro. Can induce angiogenesis. Mediates phosphorylation of ERK1/2 and thereby promotes retinal lens fiber differentiation. This chain is Fibroblast growth factor 2 (FGF2), found in Cavia porcellus (Guinea pig).